The chain runs to 332 residues: tRNA N6-adenosine threonylcarbamoyltransferase (332 aa).

Residues histidine 107 and histidine 111 each contribute to the Fe cation site. Substrate contacts are provided by residues 129-133 (LVSGG), aspartate 162, glycine 175, and asparagine 267. Residue aspartate 295 coordinates Fe cation.

The protein belongs to the KAE1 / TsaD family. Fe(2+) serves as cofactor.

The protein resides in the cytoplasm. It carries out the reaction L-threonylcarbamoyladenylate + adenosine(37) in tRNA = N(6)-L-threonylcarbamoyladenosine(37) in tRNA + AMP + H(+). Functionally, required for the formation of a threonylcarbamoyl group on adenosine at position 37 (t(6)A37) in tRNAs that read codons beginning with adenine. Is involved in the transfer of the threonylcarbamoyl moiety of threonylcarbamoyl-AMP (TC-AMP) to the N6 group of A37, together with TsaE and TsaB. TsaD likely plays a direct catalytic role in this reaction. This is tRNA N6-adenosine threonylcarbamoyltransferase from Campylobacter hominis (strain ATCC BAA-381 / DSM 21671 / CCUG 45161 / LMG 19568 / NCTC 13146 / CH001A).